The chain runs to 1291 residues: DNA-directed RNA polymerase subunit beta (1291 aa).

The protein belongs to the RNA polymerase beta chain family. As to quaternary structure, the RNAP catalytic core consists of 2 alpha, 1 beta, 1 beta' and 1 omega subunit. When a sigma factor is associated with the core the holoenzyme is formed, which can initiate transcription.

The enzyme catalyses RNA(n) + a ribonucleoside 5'-triphosphate = RNA(n+1) + diphosphate. Functionally, DNA-dependent RNA polymerase catalyzes the transcription of DNA into RNA using the four ribonucleoside triphosphates as substrates. The sequence is that of DNA-directed RNA polymerase subunit beta from Cytophaga hutchinsonii (strain ATCC 33406 / DSM 1761 / CIP 103989 / NBRC 15051 / NCIMB 9469 / D465).